Consider the following 320-residue polypeptide: Pseudouridine-5'-phosphate glycosidase (320 aa).

The Proton donor role is filled by E25. Substrate is bound by residues K85 and V105. D137 contributes to the Mn(2+) binding site. 139–141 (SAD) is a substrate binding site. K158 serves as the catalytic Nucleophile.

Belongs to the pseudouridine-5'-phosphate glycosidase family. Homotrimer. Requires Mn(2+) as cofactor.

It carries out the reaction D-ribose 5-phosphate + uracil = psi-UMP + H2O. Catalyzes the reversible cleavage of pseudouridine 5'-phosphate (PsiMP) to ribose 5-phosphate and uracil. Functions biologically in the cleavage direction, as part of a pseudouridine degradation pathway. The sequence is that of Pseudouridine-5'-phosphate glycosidase from Rhodospirillum centenum (strain ATCC 51521 / SW).